The sequence spans 84 residues: Small ribosomal subunit protein bS16 (84 aa).

The protein belongs to the bacterial ribosomal protein bS16 family.

The sequence is that of Small ribosomal subunit protein bS16 from Burkholderia mallei (strain NCTC 10247).